The chain runs to 211 residues: Peptidyl-prolyl cis-trans isomerase-like 3 (211 aa).

The PPIase cyclophilin-type domain maps to M1–I204.

This sequence belongs to the cyclophilin-type PPIase family. PPIL3 subfamily.

It catalyses the reaction [protein]-peptidylproline (omega=180) = [protein]-peptidylproline (omega=0). PPIases accelerate the folding of proteins. It catalyzes the cis-trans isomerization of proline imidic peptide bonds in oligopeptides. In Emericella nidulans (strain FGSC A4 / ATCC 38163 / CBS 112.46 / NRRL 194 / M139) (Aspergillus nidulans), this protein is Peptidyl-prolyl cis-trans isomerase-like 3 (cyp10).